A 243-amino-acid chain; its full sequence is Type III pantothenate kinase (243 aa).

Residue 7–14 (DLGNSRFK) participates in ATP binding. Substrate contacts are provided by residues tyrosine 91 and 98 to 101 (GVDR). Aspartate 100 functions as the Proton acceptor in the catalytic mechanism. Residue threonine 122 participates in ATP binding. A substrate-binding site is contributed by threonine 172.

This sequence belongs to the type III pantothenate kinase family. In terms of assembly, homodimer. The cofactor is NH4(+). It depends on K(+) as a cofactor.

The protein localises to the cytoplasm. It catalyses the reaction (R)-pantothenate + ATP = (R)-4'-phosphopantothenate + ADP + H(+). It participates in cofactor biosynthesis; coenzyme A biosynthesis; CoA from (R)-pantothenate: step 1/5. Functionally, catalyzes the phosphorylation of pantothenate (Pan), the first step in CoA biosynthesis. In Stenotrophomonas maltophilia (strain K279a), this protein is Type III pantothenate kinase.